We begin with the raw amino-acid sequence, 377 residues long: Protein RecA (377 aa).

Positions 1–13 are enriched in polar residues; the sequence is MSNEGKPLQSTES. Residues 1–20 are disordered; it reads MSNEGKPLQSTESTKIDAKS. 82–89 provides a ligand contact to ATP; the sequence is GPESSGKT. A disordered region spans residues 346-377; the sequence is GSEVSANSMRPLASAARQASSRPKLSQVSANG. The span at 362-377 shows a compositional bias: polar residues; that stretch reads RQASSRPKLSQVSANG.

Belongs to the RecA family.

Its subcellular location is the cytoplasm. Can catalyze the hydrolysis of ATP in the presence of single-stranded DNA, the ATP-dependent uptake of single-stranded DNA by duplex DNA, and the ATP-dependent hybridization of homologous single-stranded DNAs. It interacts with LexA causing its activation and leading to its autocatalytic cleavage. This chain is Protein RecA, found in Prochlorococcus marinus (strain NATL1A).